A 269-amino-acid polypeptide reads, in one-letter code: MAALSELLGDLVADVDGLFLFTPSSSHYEQFAETDVPTVVIAPENTVEAETFVELPLQFQNVKDRIRFGVEGAMEQSIVEAGDTIACNVGTFGGDPDSLVRVRVEENMRSGIYDLFANSRADPGVIRDVFEVAIELGKKGQKGEPVGALFIVGDAGKVMNKSRPLSYNPFEKSHVYVGDPIVNVMLKEFSRLDGAFVISDSGKIVSAYRYLEPSAEGVDIPKGLGARHMAGGAITRDTNATAIVLSESDGLVRAFKGGKMILEIDPEAY.

The region spanning 109-266 (RSGIYDLFAN…GGKMILEIDP (158 aa)) is the DAC domain.

It belongs to the adenylate cyclase family. DacZ subfamily. The cofactor is Mn(2+).

It carries out the reaction 2 ATP = 3',3'-c-di-AMP + 2 diphosphate. Its function is as follows. Diadenylate cyclase that catalyzes the condensation of 2 ATP molecules into cyclic di-AMP (c-di-AMP). c-di-AMP is a second messenger for intracellular signal transduction involved in the control of important regulatory processes such as osmoregulation. Is essential for H.volcanii. Overexpression of DacZ leads to cell death, suggesting the need for tight regulation of c-di-AMP levels. Cannot use GTP as substrate. The protein is Diadenylate cyclase of Haloferax volcanii (strain ATCC 29605 / DSM 3757 / JCM 8879 / NBRC 14742 / NCIMB 2012 / VKM B-1768 / DS2) (Halobacterium volcanii).